The primary structure comprises 127 residues: Ribonuclease P protein component (127 aa).

This sequence belongs to the RnpA family. As to quaternary structure, consists of a catalytic RNA component (M1 or rnpB) and a protein subunit.

The enzyme catalyses Endonucleolytic cleavage of RNA, removing 5'-extranucleotides from tRNA precursor.. In terms of biological role, RNaseP catalyzes the removal of the 5'-leader sequence from pre-tRNA to produce the mature 5'-terminus. It can also cleave other RNA substrates such as 4.5S RNA. The protein component plays an auxiliary but essential role in vivo by binding to the 5'-leader sequence and broadening the substrate specificity of the ribozyme. This chain is Ribonuclease P protein component, found in Rippkaea orientalis (strain PCC 8801 / RF-1) (Cyanothece sp. (strain PCC 8801)).